Reading from the N-terminus, the 68-residue chain is Probable tautomerase HP_0924 (68 aa).

P2 (proton acceptor; via imino nitrogen) is an active-site residue.

This sequence belongs to the 4-oxalocrotonate tautomerase family.

In Helicobacter pylori (strain ATCC 700392 / 26695) (Campylobacter pylori), this protein is Probable tautomerase HP_0924.